We begin with the raw amino-acid sequence, 205 residues long: Probable GTP-binding protein EngB (205 aa).

The region spanning 27 to 201 (TGIEIAFAGR…AAKLDFWFSP (175 aa)) is the EngB-type G domain. GTP-binding positions include 35-42 (GRSNAGKS), 62-66 (GRTQL), 80-83 (DLPG), 147-150 (TKAD), and 180-182 (FSA). Mg(2+) is bound by residues serine 42 and threonine 64.

The protein belongs to the TRAFAC class TrmE-Era-EngA-EngB-Septin-like GTPase superfamily. EngB GTPase family. It depends on Mg(2+) as a cofactor.

In terms of biological role, necessary for normal cell division and for the maintenance of normal septation. The protein is Probable GTP-binding protein EngB of Haemophilus influenzae (strain PittEE).